The sequence spans 107 residues: Phosphoribosyl-ATP pyrophosphatase (107 aa).

The protein belongs to the PRA-PH family.

Its subcellular location is the cytoplasm. It catalyses the reaction 1-(5-phospho-beta-D-ribosyl)-ATP + H2O = 1-(5-phospho-beta-D-ribosyl)-5'-AMP + diphosphate + H(+). Its pathway is amino-acid biosynthesis; L-histidine biosynthesis; L-histidine from 5-phospho-alpha-D-ribose 1-diphosphate: step 2/9. This Bacillus cereus (strain AH187) protein is Phosphoribosyl-ATP pyrophosphatase.